The following is a 90-amino-acid chain: UPF0386 protein Rru_A2144 (90 aa).

This sequence belongs to the UPF0386 family.

The chain is UPF0386 protein Rru_A2144 from Rhodospirillum rubrum (strain ATCC 11170 / ATH 1.1.1 / DSM 467 / LMG 4362 / NCIMB 8255 / S1).